The sequence spans 483 residues: GTPase Obg (483 aa).

The 158-residue stretch at 2 to 159 (SRFIDRVVLH…RDLVLELKSV (158 aa)) folds into the Obg domain. Positions 160-340 (ADVGLLGFPS…LTFALAKMVR (181 aa)) constitute an OBG-type G domain. GTP is bound by residues 166 to 173 (GFPSAGKS), 191 to 195 (FTTLV), 212 to 215 (DVPG), 292 to 295 (NKTD), and 321 to 323 (SAV). Mg(2+) contacts are provided by Ser173 and Thr193. The OCT domain maps to 358-438 (PVKVKDSSFT…IGDVSFEWEP (81 aa)).

This sequence belongs to the TRAFAC class OBG-HflX-like GTPase superfamily. OBG GTPase family. As to quaternary structure, monomer. Mg(2+) serves as cofactor.

It localises to the cytoplasm. Its function is as follows. An essential GTPase which binds GTP, GDP and possibly (p)ppGpp with moderate affinity, with high nucleotide exchange rates and a fairly low GTP hydrolysis rate. Plays a role in control of the cell cycle, stress response, ribosome biogenesis and in those bacteria that undergo differentiation, in morphogenesis control. This is GTPase Obg from Rhodococcus erythropolis (strain PR4 / NBRC 100887).